We begin with the raw amino-acid sequence, 113 residues long: Colicin-E1 immunity protein (113 aa).

Functionally, this protein is able to protect a cell, which harbors the plasmid ColE1 encoding colicin E1, against colicin E1. The polypeptide is Colicin-E1 immunity protein (imm) (Escherichia coli).